Consider the following 471-residue polypeptide: Tryptophanase (471 aa).

N6-acetyllysine is present on residues Lys-5, Lys-115, and Lys-156. The residue at position 270 (Lys-270) is an N6-(pyridoxal phosphate)lysine. Position 450 is an N6-acetyllysine (Lys-450).

This sequence belongs to the beta-eliminating lyase family. As to quaternary structure, homotetramer. Requires pyridoxal 5'-phosphate as cofactor.

It catalyses the reaction L-tryptophan + H2O = indole + pyruvate + NH4(+). Its pathway is amino-acid degradation; L-tryptophan degradation via pyruvate pathway; indole and pyruvate from L-tryptophan: step 1/1. The sequence is that of Tryptophanase (tnaA) from Escherichia coli O157:H7.